Here is a 382-residue protein sequence, read N- to C-terminus: Gap junction alpha-1 protein (382 aa).

The Cytoplasmic segment spans residues 2–23; the sequence is GDWSALGKLLDKVQAYSTAGGK. Residue Ser-5 is modified to Phosphoserine. A helical membrane pass occupies residues 24–44; that stretch reads VWLSVLFIFRILLLGTAVESA. Residues 45-76 lie on the Extracellular side of the membrane; sequence WGDEQSAFRCNTQQPGCENVCYDKSFPISHVR. Intrachain disulfides connect Cys-54–Cys-192 and Cys-187–Cys-198. A helical transmembrane segment spans residues 77–97; it reads FWVLQIIFVSVPTLLYLAHVF. The Cytoplasmic portion of the chain corresponds to 98–155; the sequence is YVMRKEEKLNKKEEELKVAQTDGVNVEMHLKQIEIKKFKYGIEEHGKVKMRGGLLRTY. Residue Lys-144 forms a Glycyl lysine isopeptide (Lys-Gly) (interchain with G-Cter in SUMO) linkage. Residues 156–176 form a helical membrane-spanning segment; sequence IISILFKSVFEVAFLLIQWYI. The Extracellular portion of the chain corresponds to 177-207; that stretch reads YGFSLSAVYTCKRDPCPHQVDCFLSRPTEKT. A helical transmembrane segment spans residues 208–228; it reads IFIIFMLVVSLVSLALNIIEL. Residues 229-382 are Cytoplasmic-facing; sequence FYVFFKGVKD…SRPRPDDLEI (154 aa). Lys-237 is covalently cross-linked (Glycyl lysine isopeptide (Lys-Gly) (interchain with G-Cter in SUMO)). The tract at residues 244–382 is interaction with NOV; that stretch reads SDPYHATTGP…SRPRPDDLEI (139 aa). Position 247 is a phosphotyrosine (Tyr-247). Phosphoserine occurs at positions 255, 257, and 262. The interaction with UBQLN4 stretch occupies residues 264-382; sequence KYAYFNGCSS…SRPRPDDLEI (119 aa). S-nitrosocysteine is present on Cys-271. Thr-275 carries the phosphothreonine modification. Ser-306, Ser-314, and Ser-325 each carry phosphoserine. The span at 317–332 shows a compositional bias: polar residues; sequence QNRMGQAGSTISNSHA. The segment at 317-382 is disordered; the sequence is QNRMGQAGST…SRPRPDDLEI (66 aa). Thr-326 bears the Phosphothreonine mark. Ser-328, Ser-330, Ser-341, and Ser-365 each carry phosphoserine. Positions 362–374 are enriched in low complexity; sequence RPSSRASSRASSR. Position 368 is a phosphoserine; by PKC/PRKCG and PKC/PRKCD (Ser-368). Residues Ser-369 and Ser-373 each carry the phosphoserine modification.

This sequence belongs to the connexin family. Alpha-type (group II) subfamily. In terms of assembly, a connexon is composed of a hexamer of connexins. Interacts with CSNK1D. Interacts with RIC1/CIP150. Interacts (via C-terminus) with TJP1. Interacts (via C-terminus) with SRC (via SH3 domain). Interacts (not ubiquitinated) with UBQLN4 (via UBA domain). Interacts with CNST. Interacts with SGSM3. Interacts with NOV. Interacts with TMEM65. Interacts with ANK3/ANKG and PKP2. Post-translationally, phosphorylation at Ser-325, Ser-328 and Ser-330 by CK1 modulates gap junction assembly. Phosphorylated at Ser-368 by PRKCG; phosphorylation induces disassembly of gap junction plaques and inhibition of gap junction activity. Phosphorylation at Ser-368 by PRKCD triggers its internalization into small vesicles leading to proteasome-mediated degradation. In terms of processing, sumoylated with SUMO1, SUMO2 and SUMO3, which may regulate the level of functional Cx43 gap junctions at the plasma membrane. May be desumoylated by SENP1 or SENP2. Acetylated in the developing cortex; leading to delocalization from the cell membrane. Post-translationally, S-nitrosylation at Cys-271 is enriched at the muscle endothelial gap junction in arteries, it augments channel permeability and may regulate of smooth muscle cell to endothelial cell communication. In terms of tissue distribution, expressed in heart, non-sensory epithelial cells, and in fibrocytes of the spiral ligament and the spiral limbus. Expressed in bladder smooth muscle cells (at protein level). Expressed in astrocytes (at protein level).

Its subcellular location is the cell membrane. It localises to the cell junction. It is found in the gap junction. The protein localises to the endoplasmic reticulum. In terms of biological role, gap junction protein that acts as a regulator of bladder capacity. A gap junction consists of a cluster of closely packed pairs of transmembrane channels, the connexons, through which materials of low MW diffuse from one cell to a neighboring cell. Negative regulator of bladder functional capacity: acts by enhancing intercellular electrical and chemical transmission, thus sensitizing bladder muscles to cholinergic neural stimuli and causing them to contract. May play a role in cell growth inhibition through the regulation of NOV expression and localization. Plays an essential role in gap junction communication in the ventricles. Connexin 43 is possibly the ATP-induced pore of mouse macrophages. The protein is Gap junction alpha-1 protein (Gja1) of Mus musculus (Mouse).